Consider the following 147-residue polypeptide: Fluoride-specific ion channel FluC 1 (147 aa).

4 helical membrane-spanning segments follow: residues 29 to 49, 61 to 81, 90 to 110, and 118 to 138; these read YVYIFIGGALGALLRYLISFL, IANLTGAFVMGLLTALTIAFF, AITTGFLGALTTFSTFQLELI, and FITLLLYAVTSYVFGILLCYV. 2 residues coordinate Na(+): G97 and T100.

It belongs to the fluoride channel Fluc/FEX (TC 1.A.43) family.

It is found in the cell membrane. It carries out the reaction fluoride(in) = fluoride(out). With respect to regulation, na(+) is not transported, but it plays an essential structural role and its presence is essential for fluoride channel function. Fluoride-specific ion channel. Important for reducing fluoride concentration in the cell, thus reducing its toxicity. The protein is Fluoride-specific ion channel FluC 1 of Staphylococcus aureus (strain Mu50 / ATCC 700699).